The following is a 1092-amino-acid chain: Myelin regulatory factor (1092 aa).

The Cytoplasmic portion of the chain corresponds to 1–730 (MDVEDENETL…CVSQRFLQAT (730 aa)). Disordered regions lie at residues 145-168 (SYAAGTLPDSPPDSGSEAYSPQQL), 187-210 (PPSRLEHPPPPHLQGPLPPHSIHQ), and 258-282 (QQHGAELPVHPSKKRKHSDSPTNTL). A compositionally biased stretch (pro residues) spans 196-205 (PPHLQGPLPP). A DNA-binding region (NDT80) is located at residues 246–507 (AQQSQMLHQL…SNPGQFESDS (262 aa)). In terms of domain architecture, Peptidase S74 spans 553–662 (SDIRAKESVE…KLTDNLETRI (110 aa)). Residues 646–677 (GAVKELCKLTDNLETRIDELERWSHKLAKLRR) adopt a coiled-coil conformation. The span at 681-695 (MKSTNSHTGSSQFSR) shows a compositional bias: polar residues. The interval 681 to 714 (MKSTNSHTGSSQFSRAGSVPYKQRPPKVMGKTVP) is disordered. Residues 731–751 (IIALVIIMAFSVISMTTLYVL) traverse the membrane as a helical segment. Residues 752–1092 (NLRSEDDMLG…YYFRFYRLCD (341 aa)) lie on the Lumenal side of the membrane. Disordered regions lie at residues 798–817 (TTQLKGNTTPPPKITKSPDW) and 849–945 (ITRK…DSRY). 2 stretches are compositionally biased toward polar residues: residues 849–867 (ITRKTSAASAETISQTDPA) and 928–945 (TPITPMDRTQGNSNDSRY). Asparagine 941, asparagine 961, asparagine 974, and asparagine 996 each carry an N-linked (GlcNAc...) asparagine glycan.

It belongs to the MRF family. As to quaternary structure, homotrimer. Post-translationally, follows autocatalytic cleavage via the peptidase S74 domain. Autoprocessing is apparently constitutive and is essential for transcriptional activity.

It localises to the endoplasmic reticulum membrane. It is found in the nucleus. Its subcellular location is the cytoplasm. Constitutes a precursor of the transcription factor. Mediates the autocatalytic cleavage that releases the Myelin regulatory factor, N-terminal component that specifically activates transcription of central nervous system (CNS) myelin genes. Functionally, membrane-bound part that has no transcription factor activity and remains attached to the endoplasmic reticulum membrane following cleavage. Its function is as follows. Transcription factor that specifically activates expression of myelin genes during oligodendrocyte (OL) maturation, thereby playing a central role in oligodendrocyte maturation and CNS myelination. The protein is Myelin regulatory factor (myrf) of Xenopus laevis (African clawed frog).